The sequence spans 141 residues: MGFQKFSPFLALSILVLLQAGSLHAAPFRSALESSPADPATLSEDEARLLLAALVQDYVQMKASELEQEQEREGSSLDSPRSKRCGNLSTCMLGTYTQDFNKFHTFPQTAIGVGAPGKKRDMSSDLERDHRPHVSMPQNAN.

The first 25 residues, 1-25 (MGFQKFSPFLALSILVLLQAGSLHA), serve as a signal peptide directing secretion. A propeptide spanning residues 26–82 (APFRSALESSPADPATLSEDEARLLLAALVQDYVQMKASELEQEQEREGSSLDSPRS) is cleaved from the precursor. Residue serine 43 is modified to Phosphoserine. 2 disordered regions span residues 64–85 (SELE…SKRC) and 111–141 (IGVG…QNAN). A disulfide bond links cysteine 85 and cysteine 91. Proline 116 carries the post-translational modification Proline amide. The segment covering 118 to 132 (KKRDMSSDLERDHRP) has biased composition (basic and acidic residues).

This sequence belongs to the calcitonin family.

It is found in the secreted. Calcitonin is a peptide hormone that causes a rapid but short-lived drop in the level of calcium and phosphate in blood by promoting the incorporation of those ions in the bones. Calcitonin function is mediated by the calcitonin receptor/CALCR and the CALCR-RAMP2 (AMYR2) receptor complex. Functionally, katacalcin is a potent plasma calcium-lowering peptide. The chain is Calcitonin from Homo sapiens (Human).